We begin with the raw amino-acid sequence, 334 residues long: Ornithine carbamoyltransferase (334 aa).

Carbamoyl phosphate is bound by residues 57 to 60 (STRT), Gln84, Arg108, and 135 to 138 (HPTQ). L-ornithine-binding positions include Asn169, Asp233, and 237 to 238 (SM). Carbamoyl phosphate-binding positions include 275–276 (CL) and Arg320.

This sequence belongs to the aspartate/ornithine carbamoyltransferase superfamily. OTCase family.

It is found in the cytoplasm. It catalyses the reaction carbamoyl phosphate + L-ornithine = L-citrulline + phosphate + H(+). Its pathway is amino-acid biosynthesis; L-arginine biosynthesis; L-arginine from L-ornithine and carbamoyl phosphate: step 1/3. Reversibly catalyzes the transfer of the carbamoyl group from carbamoyl phosphate (CP) to the N(epsilon) atom of ornithine (ORN) to produce L-citrulline. This Pasteurella multocida (strain Pm70) protein is Ornithine carbamoyltransferase (argF).